A 222-amino-acid chain; its full sequence is Methylthioribulose-1-phosphate dehydratase (222 aa).

Zn(2+) is bound by residues His-94 and His-96.

The protein belongs to the aldolase class II family. MtnB subfamily. It depends on Zn(2+) as a cofactor.

The enzyme catalyses 5-(methylsulfanyl)-D-ribulose 1-phosphate = 5-methylsulfanyl-2,3-dioxopentyl phosphate + H2O. It participates in amino-acid biosynthesis; L-methionine biosynthesis via salvage pathway; L-methionine from S-methyl-5-thio-alpha-D-ribose 1-phosphate: step 2/6. In terms of biological role, catalyzes the dehydration of methylthioribulose-1-phosphate (MTRu-1-P) into 2,3-diketo-5-methylthiopentyl-1-phosphate (DK-MTP-1-P). This chain is Methylthioribulose-1-phosphate dehydratase, found in Yersinia pseudotuberculosis serotype O:1b (strain IP 31758).